The sequence spans 369 residues: 5-amino-6-(D-ribitylamino)uracil--L-tyrosine 4-hydroxyphenyl transferase (369 aa).

In terms of domain architecture, Radical SAM core spans 56–292 (VTFVVNRNIN…AVARLYFGPL (237 aa)). [4Fe-4S] cluster contacts are provided by Cys-70, Cys-74, and Cys-77.

Belongs to the radical SAM superfamily. CofH family. Consists of two subunits, CofG and CofH. [4Fe-4S] cluster is required as a cofactor.

The enzyme catalyses 5-amino-6-(D-ribitylamino)uracil + L-tyrosine + S-adenosyl-L-methionine = 5-amino-5-(4-hydroxybenzyl)-6-(D-ribitylimino)-5,6-dihydrouracil + 2-iminoacetate + 5'-deoxyadenosine + L-methionine + H(+). It functions in the pathway cofactor biosynthesis; coenzyme F0 biosynthesis. Catalyzes the radical-mediated synthesis of 5-amino-5-(4-hydroxybenzyl)-6-(D-ribitylimino)-5,6-dihydrouracil from 5-amino-6-(D-ribitylamino)uracil and L-tyrosine. The sequence is that of 5-amino-6-(D-ribitylamino)uracil--L-tyrosine 4-hydroxyphenyl transferase from Methanopyrus kandleri (strain AV19 / DSM 6324 / JCM 9639 / NBRC 100938).